Here is a 435-residue protein sequence, read N- to C-terminus: Trigger factor (435 aa).

Residues 163-248 (DDITLIDFTG…INEIKRKELA (86 aa)) enclose the PPIase FKBP-type domain.

This sequence belongs to the FKBP-type PPIase family. Tig subfamily.

Its subcellular location is the cytoplasm. It catalyses the reaction [protein]-peptidylproline (omega=180) = [protein]-peptidylproline (omega=0). Involved in protein export. Acts as a chaperone by maintaining the newly synthesized protein in an open conformation. Functions as a peptidyl-prolyl cis-trans isomerase. The protein is Trigger factor of Desulforamulus reducens (strain ATCC BAA-1160 / DSM 100696 / MI-1) (Desulfotomaculum reducens).